Consider the following 464-residue polypeptide: Protein ABHD18 (464 aa).

The first 24 residues, 1 to 24, serve as a signal peptide directing secretion; sequence MGVSKLDILYRRLLLTKLFIRGWG. Asparagine 341 carries N-linked (GlcNAc...) asparagine glycosylation.

The protein belongs to the AB hydrolase superfamily.

The protein resides in the secreted. The protein is Protein ABHD18 of Rattus norvegicus (Rat).